Reading from the N-terminus, the 315-residue chain is Methionyl-tRNA formyltransferase (315 aa).

A (6S)-5,6,7,8-tetrahydrofolate-binding site is contributed by S114 to P117.

Belongs to the Fmt family.

It carries out the reaction L-methionyl-tRNA(fMet) + (6R)-10-formyltetrahydrofolate = N-formyl-L-methionyl-tRNA(fMet) + (6S)-5,6,7,8-tetrahydrofolate + H(+). Functionally, attaches a formyl group to the free amino group of methionyl-tRNA(fMet). The formyl group appears to play a dual role in the initiator identity of N-formylmethionyl-tRNA by promoting its recognition by IF2 and preventing the misappropriation of this tRNA by the elongation apparatus. The polypeptide is Methionyl-tRNA formyltransferase (Corynebacterium glutamicum (strain R)).